Reading from the N-terminus, the 305-residue chain is NAD kinase 2 (305 aa).

The active-site Proton acceptor is the Asp78. Residues 78-79, 152-153, Asp182, 193-198, and Asn251 each bind NAD(+); these read DG, NE, and TAYSLS.

Belongs to the NAD kinase family. It depends on a divalent metal cation as a cofactor.

It localises to the cytoplasm. It carries out the reaction NAD(+) + ATP = ADP + NADP(+) + H(+). Involved in the regulation of the intracellular balance of NAD and NADP, and is a key enzyme in the biosynthesis of NADP. Catalyzes specifically the phosphorylation on 2'-hydroxyl of the adenosine moiety of NAD to yield NADP. The polypeptide is NAD kinase 2 (Trichormus variabilis (strain ATCC 29413 / PCC 7937) (Anabaena variabilis)).